The chain runs to 676 residues: Envelope fusion protein (676 aa).

An N-terminal signal peptide occupies residues 1 to 16 (MSPLALIVLLAWHATA). Asn-76 and Asn-87 each carry an N-linked (GlcNAc...) asparagine; by host glycan. Residues 169–215 (ARELHDLAKTSNALNEQIKEVTDELVNIAKFEEHKQCLERQRDDLCG) adopt a coiled-coil conformation. Residues Asn-266, Asn-469, Asn-505, and Asn-548 are each glycosylated (N-linked (GlcNAc...) asparagine; by host). Residues 577–597 (CATAEAVVACVVLFLVALLLF) form a helical membrane-spanning segment. Asn-628 is a glycosylation site (N-linked (GlcNAc...) asparagine; by host).

N-glycosylated.

Its subcellular location is the virion membrane. The protein localises to the host cell membrane. In terms of biological role, envelope glycoprotein which mediates the fusion of viral and host endosomal membranes leading to virus entry into the host cell. The polypeptide is Envelope fusion protein (Lepidoptera (butterflies and moths)).